The sequence spans 1304 residues: NAD-dependent protein deacetylase Sir2B (1304 aa).

Positions 28 to 466 constitute a Deacetylase sirtuin-type domain; sequence TEEEKKKVKE…LISIHNIKMK (439 aa). NAD(+) contacts are provided by residues 53–72 and 274–277; these read GAGI…TGIW and QNID. Residue histidine 294 is the Proton acceptor of the active site. Zn(2+) contacts are provided by cysteine 302, cysteine 305, cysteine 327, and cysteine 330. Residues 371–373, 399–401, and valine 417 contribute to the NAD(+) site; these read GSS and NYQ. 3 disordered regions span residues 545–585, 749–827, and 1154–1203; these read EHNN…SSSI, KVKS…DKDN, and EIKY…DDNN. Composition is skewed to low complexity over residues 548–585, 756–806, and 1182–1203; these read NNNN…SSSI, NNNN…ISDH, and DDNN…DDNN.

The protein belongs to the sirtuin family. Class IV subfamily. Zn(2+) serves as cofactor.

The enzyme catalyses N(6)-acetyl-L-lysyl-[protein] + NAD(+) + H2O = 2''-O-acetyl-ADP-D-ribose + nicotinamide + L-lysyl-[protein]. In terms of biological role, regulates the expression of the surface antigen-coding var genes central to the malaria pathogenesis. Cooperates with Sir2A to mediate silencing and mutual exclusive expression of only 1 of the 60 subtelomeric var genes at a time, coding for functionally different but epitopically variant versions of the erythrocyte membrane protein 1 (PfEMP1) molecule, to evade the detection by host immune surveillance. In Plasmodium falciparum (isolate 3D7), this protein is NAD-dependent protein deacetylase Sir2B.